The following is a 995-amino-acid chain: S1 RNA-binding domain-containing protein 1 (995 aa).

A disordered region spans residues 23–78 (SFSELSSASEEDDKEDSAWEPQKKVPRSRKQPPPKESKPKRMPQVKKNAPQISDGS). K84 is covalently cross-linked (Glycyl lysine isopeptide (Lys-Gly) (interchain with G-Cter in SUMO2)). Over residues 116–132 (TKRKCAAQPHAVRRTKK) the composition is skewed to basic residues. Residues 116 to 164 (TKRKCAAQPHAVRRTKKLKVDEETSKASYLEGESNSSETPSTSTVWGGT) are disordered. K134 is covalently cross-linked (Glycyl lysine isopeptide (Lys-Gly) (interchain with G-Cter in SUMO2)). The span at 146–159 (EGESNSSETPSTST) shows a compositional bias: low complexity. Residues K166, K167, and K183 each participate in a glycyl lysine isopeptide (Lys-Gly) (interchain with G-Cter in SUMO2) cross-link. Residue K185 forms a Glycyl lysine isopeptide (Lys-Gly) (interchain with G-Cter in SUMO1); alternate linkage. A Glycyl lysine isopeptide (Lys-Gly) (interchain with G-Cter in SUMO2); alternate cross-link involves residue K185. A coiled-coil region spans residues 258–288 (ADSLREVQQTLEELRAVAKKVHSTIQKIKKE). S861 is modified (phosphoserine). The region spanning 919-992 (GTVLTGKVEN…PRSRITLDLI (74 aa)) is the S1 motif domain. A Glycyl lysine isopeptide (Lys-Gly) (interchain with G-Cter in SUMO2) cross-link involves residue K955. S964 carries the post-translational modification Phosphoserine.

In Pongo abelii (Sumatran orangutan), this protein is S1 RNA-binding domain-containing protein 1 (SRBD1).